Consider the following 247-residue polypeptide: Large ribosomal subunit protein uL30z (247 aa).

It belongs to the universal ribosomal protein uL30 family.

The sequence is that of Large ribosomal subunit protein uL30z (RPL7A) from Arabidopsis thaliana (Mouse-ear cress).